Here is a 186-residue protein sequence, read N- to C-terminus: Ribosome-recycling factor (186 aa).

It belongs to the RRF family.

The protein localises to the cytoplasm. Responsible for the release of ribosomes from messenger RNA at the termination of protein biosynthesis. May increase the efficiency of translation by recycling ribosomes from one round of translation to another. The chain is Ribosome-recycling factor from Rickettsia canadensis (strain McKiel).